Consider the following 156-residue polypeptide: Transcription elongation factor GreA (156 aa).

The stretch at 1-32 (MKKVRLTREGYEKLKQELEELKRKFMYEISER) forms a coiled coil.

Belongs to the GreA/GreB family.

In terms of biological role, necessary for efficient RNA polymerase transcription elongation past template-encoded arresting sites. The arresting sites in DNA have the property of trapping a certain fraction of elongating RNA polymerases that pass through, resulting in locked ternary complexes. Cleavage of the nascent transcript by cleavage factors such as GreA or GreB allows the resumption of elongation from the new 3'terminus. GreA releases sequences of 2 to 3 nucleotides. The polypeptide is Transcription elongation factor GreA (Thermotoga neapolitana (strain ATCC 49049 / DSM 4359 / NBRC 107923 / NS-E)).